The sequence spans 494 residues: Cysteine--tRNA ligase (494 aa).

Position 29 (Cys-29) interacts with Zn(2+). The short motif at 31–41 (VTVYDYCHLGH) is the 'HIGH' region element. Residues Cys-216, His-241, and Glu-245 each contribute to the Zn(2+) site. The 'KMSKS' region motif lies at 273 to 277 (KMSKS). An ATP-binding site is contributed by Lys-276.

It belongs to the class-I aminoacyl-tRNA synthetase family. Monomer. The cofactor is Zn(2+).

The protein localises to the cytoplasm. It carries out the reaction tRNA(Cys) + L-cysteine + ATP = L-cysteinyl-tRNA(Cys) + AMP + diphosphate. The polypeptide is Cysteine--tRNA ligase (Cyanothece sp. (strain PCC 7425 / ATCC 29141)).